The chain runs to 277 residues: Tumor necrosis factor-inducible gene 6 protein (277 aa).

A signal peptide spans 1–17; it reads MIILIYLFLLLWEDTQG. A Link domain is found at 36–129; sequence GVYHREARSG…SERWDAYCYN (94 aa). Cystine bridges form between C58/C127, C82/C103, and C135/C161. N-linked (GlcNAc...) asparagine glycosylation occurs at N118. Residues 135 to 247 enclose the CUB domain; it reads CGGVFTDPKQ…GGFQIKYVAM (113 aa). 5 residues coordinate Ca(2+): E183, D191, D232, S234, and V235. Residues C188 and C210 are joined by a disulfide bond. N258 carries N-linked (GlcNAc...) asparagine glycosylation.

Interacts (via Link domain) with inter-alpha-inhibitor (I-alpha-I) component bikunin. Interacts with ITIH2/HC2; this interaction is required for transesterification of the HC to hyaluronan. Interacts (via Link and CUB domains) with ITIH1. Chondroitin sulfate may be required for the stability of the complex. Interacts (via Link domain) with various C-X-C and C-C chemokines including PF4, CXCL8, CXCL11, CXCL12, CCL2, CCL7, CCL19, CCL21, and CCL27; this interaction interferes with chemokine binding to glycosaminoglycans. Interacts (primarily via Link domain) with BMP2; this interaction is inhibited by hyaluronan. Interacts (via both Link and CUB domains) with TNFSF11. Interacts (via CUB domain) with FN1 (via type III repeats 9-14); this interaction enhances fibronectin fibril assembly. TNFAIP6 may act as a bridging molecule between FN1 and THBS1. N-glycosylated. As to expression, expressed in airway epithelium and submucosal gland (at protein level). Colocalizes with bikunin at the ciliary border. Present in bronchoalveolar lavage fluid (at protein level). Expressed in mesenchymal stem cells. Found in the synovial fluid of patients with rheumatoid arthritis.

The protein localises to the secreted. Major regulator of extracellular matrix organization during tissue remodeling. Catalyzes the transfer of a heavy chain (HC) from inter-alpha-inhibitor (I-alpha-I) complex to hyaluronan. Cleaves the ester bond between the C-terminus of the HC and GalNAc residue of the chondroitin sulfate chain in I-alpha-I complex followed by transesterification of the HC to hyaluronan. In the process, potentiates the antiprotease function of I-alpha-I complex through release of free bikunin. Acts as a catalyst in the formation of hyaluronan-HC oligomers and hyaluronan-rich matrix surrounding the cumulus cell-oocyte complex, a necessary step for oocyte fertilization. Assembles hyaluronan in pericellular matrices that serve as platforms for receptor clustering and signaling. Enables binding of hyaluronan deposited on the surface of macrophages to LYVE1 on lymphatic endothelium and facilitates macrophage extravasation. Alters hyaluronan binding to functionally latent CD44 on vascular endothelium, switching CD44 into an active state that supports leukocyte rolling. Modulates the interaction of chemokines with extracellular matrix components and proteoglycans on endothelial cell surface, likely preventing chemokine gradient formation. In a negative feedback mechanism, may limit excessive neutrophil recruitment at inflammatory sites by antagonizing the association of CXCL8 with glycosaminoglycans on vascular endothelium. Has a role in osteogenesis and bone remodeling. Inhibits BMP2-dependent differentiation of mesenchymal stem cell to osteoblasts. Protects against bone erosion during inflammation by inhibiting TNFSF11/RANKL-dependent osteoclast activation. The protein is Tumor necrosis factor-inducible gene 6 protein (TNFAIP6) of Homo sapiens (Human).